We begin with the raw amino-acid sequence, 518 residues long: Glutamate--cysteine ligase (518 aa).

It belongs to the glutamate--cysteine ligase type 1 family. Type 1 subfamily.

The catalysed reaction is L-cysteine + L-glutamate + ATP = gamma-L-glutamyl-L-cysteine + ADP + phosphate + H(+). The protein operates within sulfur metabolism; glutathione biosynthesis; glutathione from L-cysteine and L-glutamate: step 1/2. This chain is Glutamate--cysteine ligase, found in Escherichia coli O127:H6 (strain E2348/69 / EPEC).